A 152-amino-acid chain; its full sequence is D-erythrulose-4-phosphate isomerase (152 aa).

Residue cysteine 67 is the Proton acceptor of the active site.

Belongs to the LacAB/RpiB family.

The enzyme catalyses D-erythrulose 4-phosphate = D-erythrose 4-phosphate. Its pathway is carbohydrate metabolism. In terms of biological role, involved in catabolism of D-apiose. Catalyzes the isomerization of D-erythrulose 4-phosphate to D-erythrose 4-phosphate. This chain is D-erythrulose-4-phosphate isomerase, found in Pectobacterium atrosepticum (strain SCRI 1043 / ATCC BAA-672) (Erwinia carotovora subsp. atroseptica).